The chain runs to 302 residues: Phosphoribosylaminoimidazole-succinocarboxamide synthase (302 aa).

Belongs to the SAICAR synthetase family.

It carries out the reaction 5-amino-1-(5-phospho-D-ribosyl)imidazole-4-carboxylate + L-aspartate + ATP = (2S)-2-[5-amino-1-(5-phospho-beta-D-ribosyl)imidazole-4-carboxamido]succinate + ADP + phosphate + 2 H(+). It functions in the pathway purine metabolism; IMP biosynthesis via de novo pathway; 5-amino-1-(5-phospho-D-ribosyl)imidazole-4-carboxamide from 5-amino-1-(5-phospho-D-ribosyl)imidazole-4-carboxylate: step 1/2. The polypeptide is Phosphoribosylaminoimidazole-succinocarboxamide synthase (Polaromonas sp. (strain JS666 / ATCC BAA-500)).